A 380-amino-acid chain; its full sequence is Lipid-A-disaccharide synthase (380 aa).

This sequence belongs to the LpxB family.

It carries out the reaction a lipid X + a UDP-2-N,3-O-bis[(3R)-3-hydroxyacyl]-alpha-D-glucosamine = a lipid A disaccharide + UDP + H(+). It participates in bacterial outer membrane biogenesis; LPS lipid A biosynthesis. Functionally, condensation of UDP-2,3-diacylglucosamine and 2,3-diacylglucosamine-1-phosphate to form lipid A disaccharide, a precursor of lipid A, a phosphorylated glycolipid that anchors the lipopolysaccharide to the outer membrane of the cell. The sequence is that of Lipid-A-disaccharide synthase from Francisella tularensis subsp. novicida (strain U112).